The chain runs to 465 residues: 3-isopropylmalate dehydratase large subunit (465 aa).

[4Fe-4S] cluster contacts are provided by cysteine 347, cysteine 407, and cysteine 410.

The protein belongs to the aconitase/IPM isomerase family. LeuC type 1 subfamily. In terms of assembly, heterodimer of LeuC and LeuD. The cofactor is [4Fe-4S] cluster.

The enzyme catalyses (2R,3S)-3-isopropylmalate = (2S)-2-isopropylmalate. Its pathway is amino-acid biosynthesis; L-leucine biosynthesis; L-leucine from 3-methyl-2-oxobutanoate: step 2/4. Catalyzes the isomerization between 2-isopropylmalate and 3-isopropylmalate, via the formation of 2-isopropylmaleate. This Aeromonas hydrophila subsp. hydrophila (strain ATCC 7966 / DSM 30187 / BCRC 13018 / CCUG 14551 / JCM 1027 / KCTC 2358 / NCIMB 9240 / NCTC 8049) protein is 3-isopropylmalate dehydratase large subunit.